A 94-amino-acid polypeptide reads, in one-letter code: MSRSVKKGPYVDPKLLKKIEEMNAKNEKKVIKTWSRASTIFPQMVGHTIAVHDGRKHVPIYISEEMVGHKLGEFAPTRTFKGHGAHTEKSTALK.

This sequence belongs to the universal ribosomal protein uS19 family.

In terms of biological role, protein S19 forms a complex with S13 that binds strongly to the 16S ribosomal RNA. The polypeptide is Small ribosomal subunit protein uS19 (Acetivibrio thermocellus (strain ATCC 27405 / DSM 1237 / JCM 9322 / NBRC 103400 / NCIMB 10682 / NRRL B-4536 / VPI 7372) (Clostridium thermocellum)).